Here is a 420-residue protein sequence, read N- to C-terminus: Glucose-1-phosphate adenylyltransferase 2 (420 aa).

Residues Tyr-109, Gly-175, 190–191 (EK), and Ser-208 contribute to the alpha-D-glucose 1-phosphate site.

Belongs to the bacterial/plant glucose-1-phosphate adenylyltransferase family. As to quaternary structure, homotetramer.

The catalysed reaction is alpha-D-glucose 1-phosphate + ATP + H(+) = ADP-alpha-D-glucose + diphosphate. It participates in glycan biosynthesis; glycogen biosynthesis. Functionally, involved in the biosynthesis of ADP-glucose, a building block required for the elongation reactions to produce glycogen. Catalyzes the reaction between ATP and alpha-D-glucose 1-phosphate (G1P) to produce pyrophosphate and ADP-Glc. This is Glucose-1-phosphate adenylyltransferase 2 from Pseudoalteromonas atlantica (strain T6c / ATCC BAA-1087).